The following is a 386-amino-acid chain: MATATVLEKANIGVFTNTKHDLWVADAKPTLEEVKNGQGLQPGEVTIEVRSTGICGSDVHFWHAGCIGPMIVTGDHILGHESAGQVVAVAPDVTSLKPGDRVAVEPNIICNACEPCLTGRYNGCENVQFLSTPPVDGLLRRYVNHPAIWCHKIGDMSYEDGALLEPLSVSLAGIERSGLRLGDPCLVTGAGPIGLITLLSARAAGASPIVITDIDEGRLEFAKSLVPDVRTYKVQIGLSAEQNAEGIINVFNDGQGSGPGALRPRIAMECTGVESSVASAIWSVKFGGKVFVIGVGKNEMTVPFMRLSTWEIDLQYQYRYCNTWPRAIRLVRNGVIDLKKLVTHRFLLEDAIKAFETAANPKTGAIKVQIMSSEDDVKAASAGQKI.

Residues Cys-55, His-80, Glu-81, Cys-110, Cys-113, Cys-116, Cys-124, and Glu-165 each coordinate Zn(2+). Residues 192-193, Asp-213, Arg-218, Ile-293, and 317-319 contribute to the NAD(+) site; these read PI and QYR.

This sequence belongs to the zinc-containing alcohol dehydrogenase family. In terms of assembly, homotetramer. The cofactor is Zn(2+).

The catalysed reaction is L-arabinitol + NAD(+) = L-xylulose + NADH + H(+). Its pathway is carbohydrate degradation; L-arabinose degradation via L-arabinitol; D-xylulose 5-phosphate from L-arabinose (fungal route): step 2/5. Catalyzes the NAD-dependent oxidation of L-arabinitol to L-xylulose in the fungal L-arabinose catabolic pathway. L-arabinose catabolism is important for using plant material as a carbon source. Not active with NADP as cosubstrate. In Aspergillus niger (strain ATCC MYA-4892 / CBS 513.88 / FGSC A1513), this protein is L-arabinitol 4-dehydrogenase (ladA).